The chain runs to 310 residues: Homoserine O-acetyltransferase (310 aa).

Residue cysteine 142 is the Acyl-thioester intermediate of the active site. Residues lysine 163 and serine 192 each coordinate substrate. Residue histidine 235 is the Proton acceptor of the active site. Residue glutamate 237 is part of the active site. Arginine 249 serves as a coordination point for substrate.

It belongs to the MetA family.

The protein resides in the cytoplasm. The enzyme catalyses L-homoserine + acetyl-CoA = O-acetyl-L-homoserine + CoA. It participates in amino-acid biosynthesis; L-methionine biosynthesis via de novo pathway; O-acetyl-L-homoserine from L-homoserine: step 1/1. Transfers an acetyl group from acetyl-CoA to L-homoserine, forming acetyl-L-homoserine. The chain is Homoserine O-acetyltransferase from Lachnospira eligens (strain ATCC 27750 / DSM 3376 / VPI C15-48 / C15-B4) (Eubacterium eligens).